The chain runs to 120 residues: UPF0231 protein Ent638_0667 (120 aa).

The protein belongs to the UPF0231 family.

The chain is UPF0231 protein Ent638_0667 from Enterobacter sp. (strain 638).